Reading from the N-terminus, the 533-residue chain is Retinoid isomerohydrolase (533 aa).

Ser2 is modified (N-acetylserine). Phosphothreonine is present on residues Thr101 and Thr105. Residue Cys112 is the site of S-palmitoyl cysteine; in membrane form attachment. Lys113 is subject to N6-acetyllysine. Ser117 carries the phosphoserine modification. His180 contacts Fe cation. The S-palmitoyl cysteine; in membrane form moiety is linked to residue Cys231. Fe cation-binding residues include His241 and His313. S-palmitoyl cysteine; in membrane form attachment occurs at residues Cys329 and Cys330. Fe cation is bound at residue His527.

The protein belongs to the carotenoid oxygenase family. As to quaternary structure, interacts with MYO7A; this mediates light-dependent intracellular transport of RPE65. Fe(2+) serves as cofactor. Palmitoylation by LRAT regulates ligand binding specificity; the palmitoylated form (membrane form) specifically binds all-trans-retinyl-palmitate, while the soluble unpalmitoylated form binds all-trans-retinol (vitamin A). As to expression, retinal pigment epithelium specific.

It is found in the cytoplasm. Its subcellular location is the cell membrane. It localises to the microsome membrane. It catalyses the reaction an all-trans-retinyl ester + H2O = 11-cis-retinol + a fatty acid + H(+). It carries out the reaction lutein = (3R,3'S)-zeaxanthin. The enzyme catalyses all-trans-retinyl hexadecanoate + H2O = 11-cis-retinol + hexadecanoate + H(+). Critical isomerohydrolase in the retinoid cycle involved in regeneration of 11-cis-retinal, the chromophore of rod and cone opsins. Catalyzes the cleavage and isomerization of all-trans-retinyl fatty acid esters to 11-cis-retinol which is further oxidized by 11-cis retinol dehydrogenase to 11-cis-retinal for use as visual chromophore. Essential for the production of 11-cis retinal for both rod and cone photoreceptors. Also capable of catalyzing the isomerization of lutein to meso-zeaxanthin an eye-specific carotenoid. The soluble form binds vitamin A (all-trans-retinol), making it available for LRAT processing to all-trans-retinyl ester. The membrane form, palmitoylated by LRAT, binds all-trans-retinyl esters, making them available for IMH (isomerohydrolase) processing to all-cis-retinol. The soluble form is regenerated by transferring its palmitoyl groups onto 11-cis-retinol, a reaction catalyzed by LRAT. The chain is Retinoid isomerohydrolase (RPE65) from Bos taurus (Bovine).